We begin with the raw amino-acid sequence, 329 residues long: 4-hydroxythreonine-4-phosphate dehydrogenase (329 aa).

2 residues coordinate substrate: H136 and T137. A divalent metal cation contacts are provided by H166, H211, and H266. Residues K274, N283, and R292 each contribute to the substrate site.

The protein belongs to the PdxA family. As to quaternary structure, homodimer. The cofactor is Zn(2+). It depends on Mg(2+) as a cofactor. Co(2+) is required as a cofactor.

It localises to the cytoplasm. The enzyme catalyses 4-(phosphooxy)-L-threonine + NAD(+) = 3-amino-2-oxopropyl phosphate + CO2 + NADH. The protein operates within cofactor biosynthesis; pyridoxine 5'-phosphate biosynthesis; pyridoxine 5'-phosphate from D-erythrose 4-phosphate: step 4/5. Functionally, catalyzes the NAD(P)-dependent oxidation of 4-(phosphooxy)-L-threonine (HTP) into 2-amino-3-oxo-4-(phosphooxy)butyric acid which spontaneously decarboxylates to form 3-amino-2-oxopropyl phosphate (AHAP). In Salmonella typhi, this protein is 4-hydroxythreonine-4-phosphate dehydrogenase.